A 281-amino-acid chain; its full sequence is Sulfur carrier protein FdhD (281 aa).

The Cysteine persulfide intermediate role is filled by Cys117.

Belongs to the FdhD family.

Its subcellular location is the cytoplasm. Functionally, required for formate dehydrogenase (FDH) activity. Acts as a sulfur carrier protein that transfers sulfur from IscS to the molybdenum cofactor prior to its insertion into FDH. This is Sulfur carrier protein FdhD from Xanthomonas oryzae pv. oryzae (strain MAFF 311018).